A 485-amino-acid polypeptide reads, in one-letter code: Cobyric acid synthase (485 aa).

Residues 250-448 (TQTVAVIAYP…LHGMFEDPRV (199 aa)) enclose the GATase cobBQ-type domain. The active-site Nucleophile is Cys-334. His-440 is an active-site residue.

The protein belongs to the CobB/CobQ family. CobQ subfamily.

Its pathway is cofactor biosynthesis; adenosylcobalamin biosynthesis. Catalyzes amidations at positions B, D, E, and G on adenosylcobyrinic A,C-diamide. NH(2) groups are provided by glutamine, and one molecule of ATP is hydrogenolyzed for each amidation. This Polaromonas naphthalenivorans (strain CJ2) protein is Cobyric acid synthase.